The primary structure comprises 236 residues: 1-(5-phosphoribosyl)-5-[(5-phosphoribosylamino)methylideneamino] imidazole-4-carboxamide isomerase (236 aa).

Aspartate 8 functions as the Proton acceptor in the catalytic mechanism. Residue aspartate 129 is the Proton donor of the active site.

The protein belongs to the HisA/HisF family.

The protein resides in the cytoplasm. The catalysed reaction is 1-(5-phospho-beta-D-ribosyl)-5-[(5-phospho-beta-D-ribosylamino)methylideneamino]imidazole-4-carboxamide = 5-[(5-phospho-1-deoxy-D-ribulos-1-ylimino)methylamino]-1-(5-phospho-beta-D-ribosyl)imidazole-4-carboxamide. It participates in amino-acid biosynthesis; L-histidine biosynthesis; L-histidine from 5-phospho-alpha-D-ribose 1-diphosphate: step 4/9. This is 1-(5-phosphoribosyl)-5-[(5-phosphoribosylamino)methylideneamino] imidazole-4-carboxamide isomerase from Ruminiclostridium cellulolyticum (strain ATCC 35319 / DSM 5812 / JCM 6584 / H10) (Clostridium cellulolyticum).